The primary structure comprises 168 residues: Transmembrane protein 31 (168 aa).

Basic and acidic residues predominate over residues 1 to 11; sequence MRLTEKSEGEQ. The tract at residues 1-63 is disordered; that stretch reads MRLTEKSEGE…LPSRRTPTTS (63 aa). Composition is skewed to polar residues over residues 13-22 and 35-48; these read LKPNNSNAPN and HTPA…ADTQ. Low complexity predominate over residues 49–63; it reads PSRCRLPSRRTPTTS. Transmembrane regions (helical) follow at residues 119-139 and 148-168; these read IGLP…YKFF and FFIL…LIFF.

It localises to the membrane. This chain is Transmembrane protein 31 (TMEM31), found in Homo sapiens (Human).